Consider the following 1286-residue polypeptide: Structural maintenance of chromosomes protein 4 (1286 aa).

The disordered stretch occupies residues 1–51; the sequence is MRRKGTKPSTACHQEEGPPPSQDGAHSDEEMEQPAGEAESAAPAKPPGEEL. Phosphoserine occurs at positions 21, 27, and 40. Residue 111-118 participates in ATP binding; the sequence is GPNGSGKS. Ser-141 carries the phosphoserine modification. Residues 270–589 are a coiled coil; sequence RRVEILNEHR…KVEEAKSSLA (320 aa). 2 positions are modified to N6-acetyllysine: Lys-379 and Lys-677. The SMC hinge domain occupies 611 to 725; sequence PGIYGRLGDL…ANNLDQATRV (115 aa). Coiled-coil stretches lie at residues 768 to 1018 and 1068 to 1133; these read EISV…KLEQ and ESIT…LNEF. Ser-980 carries the phosphoserine modification.

The protein belongs to the SMC family. SMC4 subfamily. As to quaternary structure, forms a heterodimer with SMC2. Component of the condensin complex, which contains the SMC2 and SMC4 heterodimer, and three non SMC subunits that probably regulate the complex: BRRN1/CAPH, CNAP1/CAPD2 and CAPG.

It is found in the nucleus. The protein resides in the cytoplasm. The protein localises to the chromosome. In terms of biological role, central component of the condensin complex, a complex required for conversion of interphase chromatin into mitotic-like condense chromosomes. The condensin complex probably introduces positive supercoils into relaxed DNA in the presence of type I topoisomerases and converts nicked DNA into positive knotted forms in the presence of type II topoisomerases. In Mus musculus (Mouse), this protein is Structural maintenance of chromosomes protein 4 (Smc4).